The following is a 97-amino-acid chain: Nucleoid-associated protein Hac_0048 (97 aa).

This sequence belongs to the YbaB/EbfC family. In terms of assembly, homodimer.

It localises to the cytoplasm. The protein localises to the nucleoid. In terms of biological role, binds to DNA and alters its conformation. May be involved in regulation of gene expression, nucleoid organization and DNA protection. The protein is Nucleoid-associated protein Hac_0048 of Helicobacter acinonychis (strain Sheeba).